The following is a 237-amino-acid chain: Ras-related protein Rab-23 (237 aa).

Alanine 19 lines the GDP pocket. GTP-binding residues include valine 20, glycine 21, lysine 22, serine 23, and serine 24. GDP is bound by residues glycine 21, lysine 22, serine 23, serine 24, and aspartate 37. Residue serine 23 coordinates Mg(2+). Positions arginine 28–phenylalanine 46 match the Switch 1 motif. Tyrosine 38 contributes to the GTP binding site. Lysine 40 serves as a coordination point for GDP. Threonine 41 contributes to the GTP binding site. Residues threonine 41 and aspartate 64 each contribute to the Mg(2+) site. The short motif at threonine 65–alanine 84 is the Switch 2 element. Residues glycine 67, asparagine 121, lysine 122, aspartate 124, serine 151, valine 152, and lysine 153 each coordinate GTP. GDP is bound by residues asparagine 121, lysine 122, and aspartate 124. 2 residues coordinate GDP: valine 152 and lysine 153. Serine 186 and serine 187 each carry phosphoserine. A disordered region spans residues glutamine 204–proline 237. Cysteine 234 bears the Cysteine methyl ester mark. Cysteine 234 carries S-geranylgeranyl cysteine lipidation. Residues serine 235–proline 237 constitute a propeptide, removed in mature form.

Belongs to the small GTPase superfamily. Rab family. In terms of assembly, interacts with SUFU. Mg(2+) is required as a cofactor. In terms of tissue distribution, detected in brain neurons (at protein level). Forebrain and midbrain.

The protein resides in the cell membrane. It localises to the cytoplasm. Its subcellular location is the endosome membrane. The protein localises to the cytoplasmic vesicle. It is found in the autophagosome. The protein resides in the phagosome. It localises to the phagosome membrane. It catalyses the reaction GTP + H2O = GDP + phosphate + H(+). Its activity is regulated as follows. Regulated by guanine nucleotide exchange factors (GEFs) which promote the exchange of bound GDP for free GTP. Regulated by GTPase activating proteins (GAPs) which increase the GTP hydrolysis activity. Inhibited by GDP dissociation inhibitors (GDIs). Its function is as follows. The small GTPases Rab are key regulators of intracellular membrane trafficking, from the formation of transport vesicles to their fusion with membranes. Rabs cycle between an inactive GDP-bound form and an active GTP-bound form that is able to recruit to membranes different set of downstream effectors directly responsible for vesicle formation, movement, tethering and fusion. Plays a role in autophagic vacuole assembly, and mediates defense against pathogens, such as S.aureus, by promoting their capture by autophagosomes that then merge with lysosomes. Together with SUFU, prevents nuclear import of GLI1, and thereby inhibits GLI1 transcription factor activity. Regulates GLI1 in differentiating chondrocytes. Likewise, regulates GLI3 proteolytic processing and modulates GLI2 and GLI3 transcription factor activity. The sequence is that of Ras-related protein Rab-23 from Mus musculus (Mouse).